We begin with the raw amino-acid sequence, 365 residues long: Cobalt-precorrin-5B C(1)-methyltransferase (365 aa).

Belongs to the CbiD family.

It carries out the reaction Co-precorrin-5B + S-adenosyl-L-methionine = Co-precorrin-6A + S-adenosyl-L-homocysteine. The protein operates within cofactor biosynthesis; adenosylcobalamin biosynthesis; cob(II)yrinate a,c-diamide from sirohydrochlorin (anaerobic route): step 6/10. In terms of biological role, catalyzes the methylation of C-1 in cobalt-precorrin-5B to form cobalt-precorrin-6A. This chain is Cobalt-precorrin-5B C(1)-methyltransferase, found in Pseudomonas fluorescens (strain ATCC BAA-477 / NRRL B-23932 / Pf-5).